We begin with the raw amino-acid sequence, 113 residues long: UPF0122 protein PEPE_0845 (113 aa).

This sequence belongs to the UPF0122 family.

Functionally, might take part in the signal recognition particle (SRP) pathway. This is inferred from the conservation of its genetic proximity to ftsY/ffh. May be a regulatory protein. The polypeptide is UPF0122 protein PEPE_0845 (Pediococcus pentosaceus (strain ATCC 25745 / CCUG 21536 / LMG 10740 / 183-1w)).